A 750-amino-acid polypeptide reads, in one-letter code: Protein O-mannosyl-transferase 2 (750 aa).

The disordered stretch occupies residues 1–23; the sequence is MPPATGGGLAESELRPRRGRCGP. Residue Ser-41 is modified to Phosphoserine. Residues 54–74 form a helical membrane-spanning segment; the sequence is AVGWWALLALVTLLSFATRFH. A glycan (N-linked (GlcNAc...) asparagine) is linked at Asn-98. Transmembrane regions (helical) follow at residues 100–120, 146–166, 191–211, 231–251, and 283–303; these read TFFFDVHPPLGKMLIGLAGYL, GFCAFLGSWLVPFAYLTVLDL, QYILLDPILMFFIMAAMLSMV, LTGVSLAGALGVKFVGLFIIL, and VLCLIVLPLALYTATFAVHFM. A glycan (N-linked (GlcNAc...) asparagine) is linked at Asn-330. 3 consecutive MIR domains span residues 334 to 390, 403 to 459, and 464 to 521; these read PEHL…IKKH, VEFV…IEVV, and GNRI…VEDH. N-linked (GlcNAc...) asparagine glycosylation is present at Asn-445. 2 N-linked (GlcNAc...) asparagine glycosylation sites follow: Asn-528 and Asn-583. 4 helical membrane passes run 596-616, 643-663, 665-685, and 700-720; these read VVWWLNLLSIALYLLSGSIIA, VLLGWTLHYFPFFLMGRVLYF, HYFPAMLFSSMLTGILWDTLL, and GIHVAGILSLLLGTAYSFYLF.

This sequence belongs to the glycosyltransferase 39 family. Interacts with POMT1. N-glycosylated. As to expression, highly expressed in testis; detected at low levels in most tissues.

Its subcellular location is the endoplasmic reticulum membrane. The enzyme catalyses a di-trans,poly-cis-dolichyl beta-D-mannosyl phosphate + L-seryl-[protein] = 3-O-(alpha-D-mannosyl)-L-seryl-[protein] + a di-trans,poly-cis-dolichyl phosphate + H(+). It carries out the reaction a di-trans,poly-cis-dolichyl beta-D-mannosyl phosphate + L-threonyl-[protein] = 3-O-(alpha-D-mannosyl)-L-threonyl-[protein] + a di-trans,poly-cis-dolichyl phosphate + H(+). Its pathway is protein modification; protein glycosylation. Slightly activated by Mg(2+) and inhibited by both Ca(+) and Mn(2+). EDTA ha no effect on activity in vitro. Transfers mannosyl residues to the hydroxyl group of serine or threonine residues. Coexpression of both POMT1 and POMT2 is necessary for enzyme activity, expression of either POMT1 or POMT2 alone is insufficient. Essentially dedicated to O-mannosylation of alpha-DAG1 and few other proteins but not of cadherins and protocaherins. The chain is Protein O-mannosyl-transferase 2 (POMT2) from Homo sapiens (Human).